We begin with the raw amino-acid sequence, 170 residues long: Large ribosomal subunit protein uL5 (170 aa).

The protein belongs to the universal ribosomal protein uL5 family. In terms of assembly, part of the 50S ribosomal subunit; contacts the 5S rRNA and probably tRNA. Forms a bridge to the 30S subunit in the 70S ribosome.

This is one of the proteins that bind and probably mediate the attachment of the 5S RNA into the large ribosomal subunit, where it forms part of the central protuberance. In the 70S ribosome it contacts protein S13 of the 30S subunit (bridge B1b), connecting the 2 subunits; this bridge is implicated in subunit movement. May contact the P site tRNA; the 5S rRNA and some of its associated proteins might help stabilize positioning of ribosome-bound tRNAs. The protein is Large ribosomal subunit protein uL5 of Thermoplasma volcanium (strain ATCC 51530 / DSM 4299 / JCM 9571 / NBRC 15438 / GSS1).